Here is a 952-residue protein sequence, read N- to C-terminus: Eukaryotic initiation factor 4F subunit p150 (952 aa).

3 disordered regions span residues Met1–Gly77, Gly115–Thr389, and Val481–Ser575. The span at His7–Glu16 shows a compositional bias: polar residues. Low complexity predominate over residues Glu29–Thr46. The span at Gln47–Pro56 shows a compositional bias: polar residues. A compositionally biased stretch (low complexity) spans Gly65–Asn74. The span at Ser140–Lys151 shows a compositional bias: basic and acidic residues. Positions Leu154 to Pro166 are enriched in polar residues. Ser163 is subject to Phosphoserine. The segment covering Asp175–Ser191 has biased composition (low complexity). A Phosphothreonine modification is found at Thr181. The interval Thr188–Thr299 is interaction with PAB1. Residue Ser195 is modified to Phosphoserine. Residues Ala218–Leu228 show a composition bias toward basic and acidic residues. Residues Glu229 to Glu244 are compositionally biased toward polar residues. Basic and acidic residues-rich tracts occupy residues Val246–Thr276, Gln283–Thr294, and Gln309–Ser333. Polar residues predominate over residues Thr355–Ala368. Position 503 is a phosphoserine (Ser503). 2 stretches are compositionally biased toward basic and acidic residues: residues Arg504–Asn521 and Arg532–Val569. Residues Glu607–Lys850 form the MIF4G domain. A disordered region spans residues Glu870 to Glu952. Residues Asn879–Arg894 are compositionally biased toward low complexity. Ser883 is modified (phosphoserine). Phosphothreonine is present on Thr888. Residues Ser892, Ser896, Ser908, and Ser948 each carry the phosphoserine modification. Residues Ser908 to Arg922 are compositionally biased toward polar residues.

This sequence belongs to the eukaryotic initiation factor 4G family. In terms of assembly, component of the eIF4F complex, which composition varies with external and internal environmental conditions. It is composed of at least eIF4A (TIF1/TIF2), eIF4E (TIF45) and eIF4G (TIF4631 or TIF4632). Interacts with PAT1 in a RNA-dependent manner.

It localises to the cytoplasm. The protein resides in the P-body. The protein localises to the stress granule. In terms of biological role, component of the eIF4F complex, which interacts with the mRNA cap structure and serves as an initial point of assembly for the translation apparatus. Stimulates translation by interaction with polyadenylate-binding protein PAB1, bringing the 5'- and 3'-ends of the mRNA in proximity. The formation of this circular mRNP structure appears to be critical for the synergistic effects of the cap and the poly(A) tail in facilitating translation initiation, recycling of ribosomes, and mRNA stability. TIF4631 is probably essential when TIF4632 is missing. The polypeptide is Eukaryotic initiation factor 4F subunit p150 (Saccharomyces cerevisiae (strain ATCC 204508 / S288c) (Baker's yeast)).